The primary structure comprises 378 residues: Uroporphyrinogen decarboxylase (378 aa).

Residues 40 to 44 (RQAGR), D90, Y167, S222, and H355 contribute to the substrate site.

It belongs to the uroporphyrinogen decarboxylase family. Homodimer.

The protein localises to the cytoplasm. The enzyme catalyses uroporphyrinogen III + 4 H(+) = coproporphyrinogen III + 4 CO2. Its pathway is porphyrin-containing compound metabolism; protoporphyrin-IX biosynthesis; coproporphyrinogen-III from 5-aminolevulinate: step 4/4. Catalyzes the decarboxylation of four acetate groups of uroporphyrinogen-III to yield coproporphyrinogen-III. The chain is Uroporphyrinogen decarboxylase from Psychrobacter cryohalolentis (strain ATCC BAA-1226 / DSM 17306 / VKM B-2378 / K5).